Here is a 102-residue protein sequence, read N- to C-terminus: ATP-dependent Clp protease adapter protein ClpS (102 aa).

The protein belongs to the ClpS family. As to quaternary structure, binds to the N-terminal domain of the chaperone ClpA.

Its function is as follows. Involved in the modulation of the specificity of the ClpAP-mediated ATP-dependent protein degradation. The sequence is that of ATP-dependent Clp protease adapter protein ClpS from Shewanella pealeana (strain ATCC 700345 / ANG-SQ1).